We begin with the raw amino-acid sequence, 1007 residues long: Retinoblastoma-related protein (1007 aa).

The segment at 406–604 (TPVTTAMTTA…EKGSSMYNSL (199 aa)) is domain A. A pocket region spans residues 406–856 (TPVTTAMTTA…NEIFIPAVKP (451 aa)). The tract at residues 605–725 (IVARAALSAE…PGREGETCAE (121 aa)) is spacer. The disordered stretch occupies residues 644-665 (PVPSLQKRESSPGQNGDIRSPK). The segment at 726–856 (TGINIFFSKI…NEIFIPAVKP (131 aa)) is domain B.

Belongs to the retinoblastoma protein (RB) family.

It is found in the nucleus. In terms of biological role, regulator of biological processes that recruits a histone deacetylase to control gene transcription. May play a role in the entry into mitosis, negatively regulating the cell proliferation. Formation of stable complexes with geminiviridae replication-associated proteins may create a cellular environment which favors viral DNA replication. This is Retinoblastoma-related protein (RBR) from Vitis vinifera (Grape).